Consider the following 501-residue polypeptide: Beta-glucosidase 25 (501 aa).

A signal peptide spans 1–19 (MSLLTLVHILVSFSACVEA). Gln-39 contacts a beta-D-glucoside. Asn-107 carries N-linked (GlcNAc...) asparagine glycosylation. A beta-D-glucoside-binding positions include His-140 and 185–186 (NE). The active-site Proton donor is Glu-186. A disulfide bond links Cys-205 and Cys-213. A beta-D-glucoside is bound by residues Tyr-329, Glu-402, Trp-452, 459–460 (EW), and Phe-468. Glu-402 (nucleophile) is an active-site residue. The N-linked (GlcNAc...) asparagine glycan is linked to Asn-478.

The protein belongs to the glycosyl hydrolase 1 family.

The enzyme catalyses Hydrolysis of terminal, non-reducing beta-D-glucosyl residues with release of beta-D-glucose.. The polypeptide is Beta-glucosidase 25 (BGLU25) (Oryza sativa subsp. japonica (Rice)).